The sequence spans 241 residues: uncharacterized protein (241 aa).

This is an uncharacterized protein from Methanocaldococcus jannaschii (strain ATCC 43067 / DSM 2661 / JAL-1 / JCM 10045 / NBRC 100440) (Methanococcus jannaschii).